The primary structure comprises 450 residues: Keratin, type I cytoskeletal 25 (450 aa).

Residues 1-25 (MSLRLPSGSRRASPRPTTGSLRLSS) are disordered. The interval 1–78 (MSLRLPSGSR…VNEGGLLSGN (78 aa)) is head. A coil 1A region spans residues 79–114 (EKVTMQNLNDRLASYLENVRALEEANADLEQKIKGW). In terms of domain architecture, IF rod spans 79-394 (EKVTMQNLND…LLIGGDDGAC (316 aa)). Residues 115–136 (YEKFGPGSCRGLDHDYSRYFPI) form a linker 1 region. The interval 137-228 (IEDLKNQIIA…KNHKEEMQVL (92 aa)) is coil 1B. A linker 12 region spans residues 229-251 (QCAAGGNVNVEMNAAPGVDLTVL). The tract at residues 252-390 (LNNMRAEYEA…ETYCLLIGGD (139 aa)) is coil 2. Residues 391–450 (DGACKSGGYKSKDYGAGNVGNQMKDPVKAIVVKKVLEEVDQRSKILTPRLHSLEEKSQSN) are tail. Ser-442 is modified (phosphoserine).

Belongs to the intermediate filament family. Heterodimer of a type I and a type II keratin. Heterodimer with type II keratin KRT5 leading to the formation of keratin intermediate filament (KIF) network. Interacts with KRT6A to form filaments.

It is found in the cytoplasm. In terms of biological role, essential for the proper assembly of type I and type II keratin protein complexes and formation of keratin intermediate filaments in the inner root sheath (irs). Plays a role in the cytoskeleton organization. This chain is Keratin, type I cytoskeletal 25, found in Bos taurus (Bovine).